The sequence spans 208 residues: Small ribosomal subunit protein uS4 (208 aa).

The S4 RNA-binding domain maps to 95-157 (RRIDNVVYRA…DRLKKLVRSN (63 aa)).

This sequence belongs to the universal ribosomal protein uS4 family. As to quaternary structure, part of the 30S ribosomal subunit. Contacts protein S5. The interaction surface between S4 and S5 is involved in control of translational fidelity.

Its function is as follows. One of the primary rRNA binding proteins, it binds directly to 16S rRNA where it nucleates assembly of the body of the 30S subunit. In terms of biological role, with S5 and S12 plays an important role in translational accuracy. The polypeptide is Small ribosomal subunit protein uS4 (Borrelia turicatae (strain 91E135)).